The primary structure comprises 74 residues: Exodeoxyribonuclease 7 small subunit (74 aa).

This sequence belongs to the XseB family. Heterooligomer composed of large and small subunits.

Its subcellular location is the cytoplasm. It carries out the reaction Exonucleolytic cleavage in either 5'- to 3'- or 3'- to 5'-direction to yield nucleoside 5'-phosphates.. Its function is as follows. Bidirectionally degrades single-stranded DNA into large acid-insoluble oligonucleotides, which are then degraded further into small acid-soluble oligonucleotides. The polypeptide is Exodeoxyribonuclease 7 small subunit (Clostridium beijerinckii (strain ATCC 51743 / NCIMB 8052) (Clostridium acetobutylicum)).